The chain runs to 275 residues: Lacto-N-neotetraose biosynthesis glycosyltransferase LgtB (275 aa).

It belongs to the glycosyltransferase 25 family.

It participates in glycan metabolism; lacto-N-neotetraose biosynthesis. The protein operates within bacterial outer membrane biogenesis; lipooligosaccharide biosynthesis. In terms of biological role, adds the second galactose to the lacto-N-tetraose chain in lipooligosaccharide (LOS). The sequence is that of Lacto-N-neotetraose biosynthesis glycosyltransferase LgtB (lgtB) from Neisseria meningitidis serogroup B (strain ATCC BAA-335 / MC58).